Reading from the N-terminus, the 163-residue chain is Seed allergenic protein RAG1 (163 aa).

An N-terminal signal peptide occupies residues 1 to 27 (MASNKVVFSVLLLVVLSVLAAAMATMA). 5 disulfide bridges follow: C39–C90, C53–C78, C61–C122, C79–C138, and C92–C150.

This sequence belongs to the cereal trypsin/alpha-amylase inhibitor family. Five disulfide bonds are present.

It is found in the secreted. Functionally, seed storage protein. The sequence is that of Seed allergenic protein RAG1 (RAG1) from Oryza sativa subsp. japonica (Rice).